We begin with the raw amino-acid sequence, 85 residues long: Small ribosomal subunit protein uS17 (85 aa).

Belongs to the universal ribosomal protein uS17 family. As to quaternary structure, part of the 30S ribosomal subunit.

In terms of biological role, one of the primary rRNA binding proteins, it binds specifically to the 5'-end of 16S ribosomal RNA. This Mycoplasmoides gallisepticum (strain R(low / passage 15 / clone 2)) (Mycoplasma gallisepticum) protein is Small ribosomal subunit protein uS17.